Reading from the N-terminus, the 328-residue chain is UPF0285 protein MJ1370 (328 aa).

This sequence belongs to the UPF0285 family.

The protein is UPF0285 protein MJ1370 of Methanocaldococcus jannaschii (strain ATCC 43067 / DSM 2661 / JAL-1 / JCM 10045 / NBRC 100440) (Methanococcus jannaschii).